The primary structure comprises 318 residues: Aspartate carbamoyltransferase catalytic subunit (318 aa).

The carbamoyl phosphate site is built by R54 and T55. Residue K82 coordinates L-aspartate. Carbamoyl phosphate contacts are provided by R104, H134, and Q137. Positions 174 and 230 each coordinate L-aspartate. Residues G271 and P272 each coordinate carbamoyl phosphate.

It belongs to the aspartate/ornithine carbamoyltransferase superfamily. ATCase family. In terms of assembly, heterododecamer (2C3:3R2) of six catalytic PyrB chains organized as two trimers (C3), and six regulatory PyrI chains organized as three dimers (R2).

It catalyses the reaction carbamoyl phosphate + L-aspartate = N-carbamoyl-L-aspartate + phosphate + H(+). The protein operates within pyrimidine metabolism; UMP biosynthesis via de novo pathway; (S)-dihydroorotate from bicarbonate: step 2/3. Catalyzes the condensation of carbamoyl phosphate and aspartate to form carbamoyl aspartate and inorganic phosphate, the committed step in the de novo pyrimidine nucleotide biosynthesis pathway. The chain is Aspartate carbamoyltransferase catalytic subunit from Clavibacter sepedonicus (Clavibacter michiganensis subsp. sepedonicus).